The following is a 239-amino-acid chain: Small ribosomal subunit protein eS1 (239 aa).

The interval 1–24 (MAIQPPGSYPQGNKKGKAKKKSGQ) is disordered.

The protein belongs to the eukaryotic ribosomal protein eS1 family. In terms of assembly, component of the small ribosomal subunit. Mature ribosomes consist of a small (40S) and a large (60S) subunit. The 40S subunit contains about 33 different proteins and 1 molecule of RNA (18S). The 60S subunit contains about 49 different proteins and 3 molecules of RNA (25S, 5.8S and 5S).

The protein resides in the cytoplasm. The protein is Small ribosomal subunit protein eS1 of Encephalitozoon cuniculi (strain GB-M1) (Microsporidian parasite).